Here is a 286-residue protein sequence, read N- to C-terminus: NADPH-dependent 7-cyano-7-deazaguanine reductase (286 aa).

Position 92 to 94 (92 to 94) interacts with substrate; sequence IES. 94–95 contacts NADPH; it reads SK. Cysteine 194 acts as the Thioimide intermediate in catalysis. Aspartate 201 (proton donor) is an active-site residue. Residue 233–234 coordinates substrate; that stretch reads HE. 262–263 contacts NADPH; it reads RG.

It belongs to the GTP cyclohydrolase I family. QueF type 2 subfamily. Homodimer.

It localises to the cytoplasm. The catalysed reaction is 7-aminomethyl-7-carbaguanine + 2 NADP(+) = 7-cyano-7-deazaguanine + 2 NADPH + 3 H(+). The protein operates within tRNA modification; tRNA-queuosine biosynthesis. Its function is as follows. Catalyzes the NADPH-dependent reduction of 7-cyano-7-deazaguanine (preQ0) to 7-aminomethyl-7-deazaguanine (preQ1). In Shewanella sp. (strain MR-7), this protein is NADPH-dependent 7-cyano-7-deazaguanine reductase.